The chain runs to 58 residues: Large ribosomal subunit protein uL30 (58 aa).

The protein belongs to the universal ribosomal protein uL30 family. In terms of assembly, part of the 50S ribosomal subunit.

In Novosphingobium aromaticivorans (strain ATCC 700278 / DSM 12444 / CCUG 56034 / CIP 105152 / NBRC 16084 / F199), this protein is Large ribosomal subunit protein uL30.